Consider the following 340-residue polypeptide: MEF2 transcription factor homolog (340 aa).

Positions M1–D61 constitute an MADS-box domain. Disordered stretches follow at residues R90–V112, N193–P217, L258–S283, and P312–T340. Low complexity predominate over residues S200–S211. Polar residues predominate over residues L258–P268. The span at S269–S283 shows a compositional bias: low complexity. A compositionally biased stretch (basic and acidic residues) spans M318–T332.

It belongs to the MEF2 family. Interacts with histone deacetylase hda-4 isoform b.

The protein resides in the nucleus. Transcription regulator. Binds specifically to the MEF2 element, 5'-[TC]TA[AT][AT][AT][AT]TA[AG]-3' in the regulatory elements of target genes, such as chemoreceptors str-1 and srh-234. Involved in transduction of sensory signals, together with egl-4, kin-29 and hda-4; binding to histone deacetylase hda-4 enables negative modulation of chemoreceptor gene expression in chemosensory neurons. In response to starvation, negatively modulates expression of chemoreceptor srh-234 in ADL sensory neurons, acting in concert with basic helix-loop-helix (bHLH) transcription factors. Plays a role in regulating muscle sensitivity to acetylcholine (ACh) and the magnitude of presynaptic ACh release via a retrograde signal, perhaps by indirectly decreasing Ras-related protein Rab-3 activity. This Caenorhabditis elegans protein is MEF2 transcription factor homolog.